The primary structure comprises 296 residues: MATLGPMNTKVTTTHLYNHRDLREQAMIMLKEVRAIDGVEALSEQFVRGLAEPGLGHTHYTVSVDGRIIGLGATDGETSELAVHPAHRRQGIGRELIDALPTDGVWAHGDLPPAQALASSLGLNKTRELLVMAVEGDALREAAVYDNPAGITNSSLKTAPGTRDEVEGKWLKANNEAFHWHPEQGGWDRNRLTRAQSATWFRETDVLFLWDGDELVGFHWVKKHSDELQEIYVVGLAEAYRGKGLGDPLVRLGLRHMVNGGARRVILYVEADNDSAVAAYEKLGFTVAERHVVYEK.

N-acetyltransferase domains follow at residues 17–146 and 156–296; these read YNHR…AVYD and LKTA…VYEK. Glu44 lines the 1D-myo-inositol 2-(L-cysteinylamino)-2-deoxy-alpha-D-glucopyranoside pocket. 81–83 is a binding site for acetyl-CoA; it reads LAV. Residues Glu183, Lys222, and Glu230 each contribute to the 1D-myo-inositol 2-(L-cysteinylamino)-2-deoxy-alpha-D-glucopyranoside site. Acetyl-CoA is bound by residues 234 to 236 and 241 to 247; these read VGL and RGKGLGD. Position 268 (Tyr268) interacts with 1D-myo-inositol 2-(L-cysteinylamino)-2-deoxy-alpha-D-glucopyranoside.

This sequence belongs to the acetyltransferase family. MshD subfamily. Monomer.

It carries out the reaction 1D-myo-inositol 2-(L-cysteinylamino)-2-deoxy-alpha-D-glucopyranoside + acetyl-CoA = mycothiol + CoA + H(+). Catalyzes the transfer of acetyl from acetyl-CoA to desacetylmycothiol (Cys-GlcN-Ins) to form mycothiol. This chain is Mycothiol acetyltransferase, found in Corynebacterium efficiens (strain DSM 44549 / YS-314 / AJ 12310 / JCM 11189 / NBRC 100395).